A 476-amino-acid polypeptide reads, in one-letter code: Eukaryotic translation initiation factor 3 subunit L (476 aa).

Residues 257-452 (DAIRMFSHIL…DLDYALENDL (196 aa)) enclose the PCI domain.

The protein belongs to the eIF-3 subunit L family. In terms of assembly, component of the eukaryotic translation initiation factor 3 (eIF-3) complex.

The protein localises to the cytoplasm. Its function is as follows. Component of the eukaryotic translation initiation factor 3 (eIF-3) complex, which is involved in protein synthesis of a specialized repertoire of mRNAs and, together with other initiation factors, stimulates binding of mRNA and methionyl-tRNAi to the 40S ribosome. The eIF-3 complex specifically targets and initiates translation of a subset of mRNAs involved in cell proliferation. In Aspergillus fumigatus (strain CBS 144.89 / FGSC A1163 / CEA10) (Neosartorya fumigata), this protein is Eukaryotic translation initiation factor 3 subunit L.